The following is a 134-amino-acid chain: Cytochrome b (134 aa).

3 helical membrane-spanning segments follow: residues 33–53 (FGSLLGVCLGVQILTGLFLAI), 77–98 (WLLRYLHANGASMFFICLYLHV), and 113–133 (WNIGILLLFAVMATAFMGYVL). The heme b site is built by H83 and H97.

This sequence belongs to the cytochrome b family. In terms of assembly, the cytochrome bc1 complex contains 11 subunits: 3 respiratory subunits (MT-CYB, CYC1 and UQCRFS1), 2 core proteins (UQCRC1 and UQCRC2) and 6 low-molecular weight proteins (UQCRH/QCR6, UQCRB/QCR7, UQCRQ/QCR8, UQCR10/QCR9, UQCR11/QCR10 and a cleavage product of UQCRFS1). This cytochrome bc1 complex then forms a dimer. It depends on heme b as a cofactor.

The protein localises to the mitochondrion inner membrane. In terms of biological role, component of the ubiquinol-cytochrome c reductase complex (complex III or cytochrome b-c1 complex) that is part of the mitochondrial respiratory chain. The b-c1 complex mediates electron transfer from ubiquinol to cytochrome c. Contributes to the generation of a proton gradient across the mitochondrial membrane that is then used for ATP synthesis. The polypeptide is Cytochrome b (MT-CYB) (Platyrrhinus helleri (Heller's broad-nosed bat)).